The following is a 468-amino-acid chain: 6-phospho-beta-galactosidase (468 aa).

D-galactose 6-phosphate is bound by residues Gln-19, His-116, Asn-159, Glu-160, and Asn-297. Glu-160 (proton donor) is an active-site residue. Glu-375 serves as the catalytic Nucleophile. D-galactose 6-phosphate-binding residues include Ser-428, Trp-429, Lys-435, and Tyr-437.

It belongs to the glycosyl hydrolase 1 family.

The enzyme catalyses a 6-phospho-beta-D-galactoside + H2O = D-galactose 6-phosphate + an alcohol. The protein operates within carbohydrate metabolism; lactose degradation; D-galactose 6-phosphate and beta-D-glucose from lactose 6-phosphate: step 1/1. This is 6-phospho-beta-galactosidase from Streptococcus pyogenes serotype M12 (strain MGAS2096).